The chain runs to 203 residues: Protein shisa-like-1a (203 aa).

Residues 1–25 (MIMNGRWSFNTLAIIFILLSTAALS) form the signal peptide. At 26–97 (AHFRVCEPYS…SDSFAHNNYT (72 aa)) the chain is on the extracellular side. N-linked (GlcNAc...) asparagine glycans are attached at residues Asn53, Asn63, Asn72, Asn83, and Asn95. The chain crosses the membrane as a helical span at residues 98 to 118 (ALIGVWIYGFFVMVLLALDFL). At 119–203 (YYSAMNYELC…LLSFQTSTAW (85 aa)) the chain is on the cytoplasmic side. The interval 157–191 (ELNTGPGLSQQQQLHLHHHHHHHHPRHSLRGDTQS) is disordered. Over residues 161 to 170 (GPGLSQQQQL) the composition is skewed to low complexity. Residues 171–184 (HLHHHHHHHHPRHS) show a composition bias toward basic residues.

This sequence belongs to the shisa family.

The protein resides in the membrane. The polypeptide is Protein shisa-like-1a (shisal1a) (Danio rerio (Zebrafish)).